Consider the following 137-residue polypeptide: NADH-quinone oxidoreductase subunit A (137 aa).

Transmembrane regions (helical) follow at residues 12-32 (WGFA…LGLS), 66-86 (FYLV…LFAW), and 95-115 (WTGF…LVYL).

The protein belongs to the complex I subunit 3 family. As to quaternary structure, NDH-1 is composed of 13 different subunits. Subunits NuoA, H, J, K, L, M, N constitute the membrane sector of the complex.

It localises to the cell inner membrane. It carries out the reaction a quinone + NADH + 5 H(+)(in) = a quinol + NAD(+) + 4 H(+)(out). Its function is as follows. NDH-1 shuttles electrons from NADH, via FMN and iron-sulfur (Fe-S) centers, to quinones in the respiratory chain. The immediate electron acceptor for the enzyme in this species is believed to be ubiquinone. Couples the redox reaction to proton translocation (for every two electrons transferred, four hydrogen ions are translocated across the cytoplasmic membrane), and thus conserves the redox energy in a proton gradient. This is NADH-quinone oxidoreductase subunit A from Pseudomonas savastanoi pv. phaseolicola (strain 1448A / Race 6) (Pseudomonas syringae pv. phaseolicola (strain 1448A / Race 6)).